An 89-amino-acid chain; its full sequence is NADH-ubiquinone oxidoreductase chain 4L (89 aa).

A run of 3 helical transmembrane segments spans residues 1–21 (MNFSIFLFLIGILGFVLNRKN), 22–42 (IILMLISIEIMLLAITFLILI), and 55–75 (FAIYIITIAGAESAIGLGILV).

It belongs to the complex I subunit 4L family.

The protein localises to the mitochondrion membrane. It carries out the reaction a ubiquinone + NADH + 5 H(+)(in) = a ubiquinol + NAD(+) + 4 H(+)(out). Its function is as follows. Core subunit of the mitochondrial membrane respiratory chain NADH dehydrogenase (Complex I) that is believed to belong to the minimal assembly required for catalysis. Complex I functions in the transfer of electrons from NADH to the respiratory chain. The immediate electron acceptor for the enzyme is believed to be ubiquinone. The protein is NADH-ubiquinone oxidoreductase chain 4L (nd4L) of Talaromyces marneffei (Penicillium marneffei).